Consider the following 278-residue polypeptide: Small ribosomal subunit protein uS3 (278 aa).

In terms of domain architecture, KH type-2 spans 39 to 107 (LRKAISKKYV…KVQLNIVEIS (69 aa)). A disordered region spans residues 255 to 278 (AEIPAEEKPKRVVKKAENITKEEE).

It belongs to the universal ribosomal protein uS3 family. As to quaternary structure, part of the 30S ribosomal subunit. Forms a tight complex with proteins S10 and S14.

Functionally, binds the lower part of the 30S subunit head. Binds mRNA in the 70S ribosome, positioning it for translation. This chain is Small ribosomal subunit protein uS3, found in Dehalococcoides mccartyi (strain CBDB1).